The following is a 733-amino-acid chain: E3 ubiquitin-protein ligase COP1 (733 aa).

The segment at 1–43 (MSGSRQAGSGSAGTSPGSSAASSVTSASSSLSSSPSPPSVAAS) is disordered. The Nuclear localization signal 1 signature appears at 111-115 (SSRKR). The segment at 138-176 (CPICFDMIEEAYMTKCGHSFCYKCIHQSLEDNNRCPKCN) adopts an RING-type zinc-finger fold. A Nuclear localization signal 2 motif is present at residues 197–208 (KQKQRFEEKRFK). Residues 231–306 (DQDNLDLANV…RVEEMSGLYS (76 aa)) are a coiled coil. The short motif at 237 to 247 (LANVNLMLELL) is the Nuclear export signal element. Residues 307–327 (PVSEDSTVPQFEAPSPSHSSI) are disordered. WD repeat units follow at residues 421-460 (NGSSIVSSIEFDRDCDYFAIAGVTKKIKVYEYGTVIQDAV), 470-510 (TCNS…RSKV), 513-553 (EHEK…SVAS), 555-595 (EAKA…QPIM), 599-637 (GHRKAVSYAKFVSGEEIVSASTDSQLKLWNVGKPYCLRS), 640-679 (GHINEKNFVGLASNGDYIACGSENNSLYLYYKGLSKTLLT), and 695-731 (EDDTNEFVSAVCWRALSDGESNVLIAANSQGTIKVLE). The segment at 645-647 (KNF) is interaction with TRIB1.

Belongs to the COP1 family. As to quaternary structure, homodimer. Homodimerization is mediated by the coiled coil domain. Component of the DCX DET1-COP1 ubiquitin ligase complex at least composed of RBX1, DET1, DDB1, CUL4A and COP1. Isoform 2 does not interact with CUL4A but still binds to RBX1, suggesting that the interaction may be mediated by another cullin protein. Isoform 1 and isoform 2 interact with CUL5 but not with CUL1, CUL2 not CUL3. Interacts with bZIP transcription factors JUN, JUNB and JUND but not with FOS, ATF2 nor XBP1. Interacts with p53 (TP53). Interacts with COPS6; this interaction stabilizes RFWD2 through reducing its auto-ubiquitination and decelerating its turnover rate. Interacts with SFN; this interaction leads to SFN degradation. Interacts with p53/TP53 and MTA1. Interacts with TRIB1 (via C-terminus) and TRIB2.

It localises to the nucleus speckle. The protein localises to the cytoplasm. It carries out the reaction S-ubiquitinyl-[E2 ubiquitin-conjugating enzyme]-L-cysteine + [acceptor protein]-L-lysine = [E2 ubiquitin-conjugating enzyme]-L-cysteine + N(6)-ubiquitinyl-[acceptor protein]-L-lysine.. It participates in protein modification; protein ubiquitination. TRIB1 competes with substrates for RFWD2 binding. Its function is as follows. E3 ubiquitin-protein ligase that mediates ubiquitination and subsequent proteasomal degradation of target proteins. E3 ubiquitin ligases accept ubiquitin from an E2 ubiquitin-conjugating enzyme in the form of a thioester and then directly transfers the ubiquitin to targeted substrates. Involved in JUN ubiquitination and degradation. Directly involved in p53 (TP53) ubiquitination and degradation, thereby abolishing p53-dependent transcription and apoptosis. Ubiquitinates p53 independently of MDM2 or RCHY1. Probably mediates E3 ubiquitin ligase activity by functioning as the essential RING domain subunit of larger E3 complexes. In contrast, it does not constitute the catalytic RING subunit in the DCX DET1-COP1 complex that negatively regulates JUN, the ubiquitin ligase activity being mediated by RBX1. Involved in 14-3-3 protein sigma/SFN ubiquitination and proteasomal degradation, leading to AKT activation and promotion of cell survival. Ubiquitinates MTA1 leading to its proteasomal degradation. Upon binding to TRIB1, ubiquitinates CEBPA, which lacks a canonical COP1-binding motif. In Mus musculus (Mouse), this protein is E3 ubiquitin-protein ligase COP1.